The chain runs to 340 residues: Coproporphyrin III ferrochelatase (340 aa).

S52 and Y116 together coordinate Fe-coproporphyrin III. Fe(2+)-binding residues include H172 and E255.

This sequence belongs to the ferrochelatase family.

It is found in the cytoplasm. The catalysed reaction is Fe-coproporphyrin III + 2 H(+) = coproporphyrin III + Fe(2+). Its pathway is porphyrin-containing compound metabolism; protoheme biosynthesis. Its function is as follows. Involved in coproporphyrin-dependent heme b biosynthesis. Catalyzes the insertion of ferrous iron into coproporphyrin III to form Fe-coproporphyrin III. The chain is Coproporphyrin III ferrochelatase from Mycobacterium ulcerans (strain Agy99).